Consider the following 665-residue polypeptide: ATPase WRNIP1 (665 aa).

The UBZ4-type zinc finger occupies 17 to 44; that stretch reads QVQCPVCQQMMPAAHINSHLDRCLLLHP. The Zn(2+) site is built by C20, C23, H31, H35, and C39. The segment at 48 to 190 is disordered; that stretch reads AEPAAGSHRA…DGEDDPGHWD (143 aa). 2 positions are modified to phosphoserine: S65 and S75. A compositionally biased stretch (polar residues) spans 76–89; the sequence is ESSALKQPATPTAA. K81 is covalently cross-linked (Glycyl lysine isopeptide (Lys-Gly) (interchain with G-Cter in ubiquitin)). T85 bears the Phosphothreonine mark. Residues S91 and S92 each carry the phosphoserine modification. Residues 92–104 show a composition bias toward acidic residues; the sequence is SEGEGEEGDDGGE. T116 is subject to Phosphothreonine. The span at 130–155 shows a compositional bias: low complexity; the sequence is RSSSPGRKGSGKRPAAAAAAGSASPR. S139 carries the post-translational modification Phosphoserine. Residue K141 forms a Glycyl lysine isopeptide (Lys-Gly) (interchain with G-Cter in ubiquitin) linkage. Residue S153 is modified to Phosphoserine. The span at 159–184 shows a compositional bias: acidic residues; the sequence is EAEAQEEEEAVGDGDGDGDADADGED. A Glycyl lysine isopeptide (Lys-Gly) (interchain with G-Cter in ubiquitin) cross-link involves residue K225. ATP is bound at residue 270-276; that stretch reads PGCGKTT. Residues K301, K310, K316, K322, and K335 each participate in a glycyl lysine isopeptide (Lys-Gly) (interchain with G-Cter in ubiquitin) cross-link. A Glycyl lysine isopeptide (Lys-Gly) (interchain with G-Cter in SUMO2); alternate cross-link involves residue K482. K482 participates in a covalent cross-link: Glycyl lysine isopeptide (Lys-Gly) (interchain with G-Cter in ubiquitin); alternate. 2 positions are modified to phosphotyrosine: Y534 and Y562. A Glycyl lysine isopeptide (Lys-Gly) (interchain with G-Cter in ubiquitin) cross-link involves residue K627. Residue K633 forms a Glycyl lysine isopeptide (Lys-Gly) (interchain with G-Cter in ubiquitin); alternate linkage. N6-acetyllysine; alternate is present on K633. K636 is covalently cross-linked (Glycyl lysine isopeptide (Lys-Gly) (interchain with G-Cter in ubiquitin)).

This sequence belongs to the AAA ATPase family. RarA/MGS1/WRNIP1 subfamily. As to quaternary structure, forms homooligomers, possibly octamers. Directly interacts with POLD1, POLD2 and POLD4. Interacts with the N-terminal domain of WRN. Interacts (via UBZ4-type zinc finger) with monoubiquitin and polyubiquitin. Interacts with TRIM14 and PPP6C; these interactions positively regulate the RIGI signaling pathway. In terms of processing, sumoylated with SUMO1 and SUMO2/3. In terms of tissue distribution, ubiquitously expressed.

It is found in the nucleus. It localises to the cytoplasm. It catalyses the reaction ATP + H2O = ADP + phosphate + H(+). Functions as a modulator of initiation or reinitiation events during DNA polymerase delta-mediated DNA synthesis. In the presence of ATP, stimulation of DNA polymerase delta-mediated DNA synthesis is decreased. Also plays a role in the innate immune defense against viruses. Stabilizes the RIGI dsRNA interaction and promotes RIGI 'Lys-63'-linked polyubiquitination. In turn, RIGI transmits the signal through mitochondrial MAVS. This is ATPase WRNIP1 from Homo sapiens (Human).